The chain runs to 207 residues: Small ribosomal subunit protein uS4 (207 aa).

Residues 31–52 (KAKFDSKPGQHGRTSGARTSDY) are disordered. The region spanning 97-157 (CRLDNVVYRM…DKSKKQARIV (61 aa)) is the S4 RNA-binding domain.

It belongs to the universal ribosomal protein uS4 family. As to quaternary structure, part of the 30S ribosomal subunit. Contacts protein S5. The interaction surface between S4 and S5 is involved in control of translational fidelity.

One of the primary rRNA binding proteins, it binds directly to 16S rRNA where it nucleates assembly of the body of the 30S subunit. Its function is as follows. With S5 and S12 plays an important role in translational accuracy. This Acidovorax sp. (strain JS42) protein is Small ribosomal subunit protein uS4.